The following is a 435-amino-acid chain: GTPase Der (435 aa).

EngA-type G domains follow at residues 4 to 167 (KIVA…SKND) and 175 to 350 (TKIA…QSLS). Residues 10–17 (GRPNVGKS), 57–61 (DTGGI), 119–122 (NKYD), 181–188 (GRPNVGKS), 228–232 (DTAGI), and 293–296 (NKWD) contribute to the GTP site. A KH-like domain is found at 351-435 (VKVKTYVLNE…PINLIFRERK (85 aa)).

The protein belongs to the TRAFAC class TrmE-Era-EngA-EngB-Septin-like GTPase superfamily. EngA (Der) GTPase family. In terms of assembly, associates with the 50S ribosomal subunit.

Its function is as follows. GTPase that plays an essential role in the late steps of ribosome biogenesis. In Mycoplasma mycoides subsp. mycoides SC (strain CCUG 32753 / NCTC 10114 / PG1), this protein is GTPase Der.